A 248-amino-acid chain; its full sequence is Triosephosphate isomerase A (248 aa).

Asn11 and Lys13 together coordinate substrate. The active-site Electrophile is His95. The Proton acceptor role is filled by Glu165.

The protein belongs to the triosephosphate isomerase family. In terms of assembly, homodimer.

Its subcellular location is the cytoplasm. The enzyme catalyses dihydroxyacetone phosphate = methylglyoxal + phosphate. It carries out the reaction D-glyceraldehyde 3-phosphate = dihydroxyacetone phosphate. It functions in the pathway carbohydrate degradation; glycolysis; D-glyceraldehyde 3-phosphate from glycerone phosphate: step 1/1. The protein operates within carbohydrate biosynthesis; gluconeogenesis. In terms of biological role, triosephosphate isomerase is an extremely efficient metabolic enzyme that catalyzes the interconversion between dihydroxyacetone phosphate (DHAP) and D-glyceraldehyde-3-phosphate (G3P) in glycolysis and gluconeogenesis. It is also responsible for the non-negligible production of methylglyoxal a reactive cytotoxic side-product that modifies and can alter proteins, DNA and lipids. This chain is Triosephosphate isomerase A (tpi1a), found in Danio rerio (Zebrafish).